Reading from the N-terminus, the 269-residue chain is Small ribosomal subunit protein eS1 (269 aa).

2 disordered regions span residues 1-20 and 249-269; these read MAVG…SKKK and AASG…QESV.

The protein belongs to the eukaryotic ribosomal protein eS1 family. In terms of assembly, component of the small ribosomal subunit. Mature ribosomes consist of a small (40S) and a large (60S) subunit. The 40S subunit contains about 33 different proteins and 1 molecule of RNA (18S). The 60S subunit contains about 49 different proteins and 3 molecules of RNA (28S, 5.8S and 5S).

Its subcellular location is the cytoplasm. In Anopheles darlingi (Mosquito), this protein is Small ribosomal subunit protein eS1.